The primary structure comprises 260 residues: Cytochrome c1-2, heme protein, mitochondrial (260 aa).

Residues 1 to 17 (IGAGVSGLLGFATVASA) constitute a mitochondrion transit peptide. Residues 18-221 (DEAEHGLECP…AAEPEMEERK (204 aa)) are Mitochondrial intermembrane-facing. The Cytochrome c domain maps to 43–150 (ASIRRGHQVY…NGQNYVFALL (108 aa)). Cys-56, Cys-59, His-60, and Met-179 together coordinate heme c. Residues 222–241 (LMGFKWIFVLSLALLQAAYY) traverse the membrane as a helical segment. Over 242–260 (RRLRWSVLKSRKLVLDVVN) the chain is Mitochondrial matrix.

Belongs to the cytochrome c family. Component of the ubiquinol-cytochrome c oxidoreductase (cytochrome b-c1 complex, complex III, CIII), a multisubunit enzyme composed of 3 respiratory subunits cytochrome b, cytochrome c1 and Rieske protein, 2 core protein subunits, and additional low-molecular weight protein subunits. The complex exists as an obligatory dimer and forms supercomplexes (SCs) in the inner mitochondrial membrane with cytochrome c oxidase (complex IV, CIV). Heme c is required as a cofactor. In terms of tissue distribution, in all tissues analyzed.

The protein localises to the mitochondrion inner membrane. It catalyses the reaction a quinol + 2 Fe(III)-[cytochrome c](out) = a quinone + 2 Fe(II)-[cytochrome c](out) + 2 H(+)(out). Its function is as follows. Component of the ubiquinol-cytochrome c oxidoreductase, a multisubunit transmembrane complex that is part of the mitochondrial electron transport chain which drives oxidative phosphorylation. The respiratory chain contains 3 multisubunit complexes succinate dehydrogenase (complex II, CII), ubiquinol-cytochrome c oxidoreductase (cytochrome b-c1 complex, complex III, CIII) and cytochrome c oxidase (complex IV, CIV), that cooperate to transfer electrons derived from NADH and succinate to molecular oxygen, creating an electrochemical gradient over the inner membrane that drives transmembrane transport and the ATP synthase. The cytochrome b-c1 complex catalyzes electron transfer from ubiquinol to cytochrome c, linking this redox reaction to translocation of protons across the mitochondrial inner membrane, with protons being carried across the membrane as hydrogens on the quinol. In the process called Q cycle, 2 protons are consumed from the matrix, 4 protons are released into the intermembrane space and 2 electrons are passed to cytochrome c. Cytochrome c1 is a catalytic core subunit containing a c-type heme. It transfers electrons from the [2Fe-2S] iron-sulfur cluster of the Rieske protein to cytochrome c. The sequence is that of Cytochrome c1-2, heme protein, mitochondrial (CYCL) from Solanum tuberosum (Potato).